A 392-amino-acid polypeptide reads, in one-letter code: S-adenosylmethionine synthase (392 aa).

His-17 contributes to the ATP binding site. Asp-19 contacts Mg(2+). Residue Glu-45 coordinates K(+). Residues Glu-58 and Gln-102 each coordinate L-methionine. The segment at 102–112 (QSADIAQGVDA) is flexible loop. ATP contacts are provided by residues 169–171 (DAK), 235–236 (KF), Asp-244, 250–251 (RK), Ala-267, and Lys-271. Residue Asp-244 coordinates L-methionine. Lys-275 serves as a coordination point for L-methionine.

This sequence belongs to the AdoMet synthase family. In terms of assembly, homotetramer; dimer of dimers. It depends on Mg(2+) as a cofactor. The cofactor is K(+).

It is found in the cytoplasm. It carries out the reaction L-methionine + ATP + H2O = S-adenosyl-L-methionine + phosphate + diphosphate. The protein operates within amino-acid biosynthesis; S-adenosyl-L-methionine biosynthesis; S-adenosyl-L-methionine from L-methionine: step 1/1. Catalyzes the formation of S-adenosylmethionine (AdoMet) from methionine and ATP. The overall synthetic reaction is composed of two sequential steps, AdoMet formation and the subsequent tripolyphosphate hydrolysis which occurs prior to release of AdoMet from the enzyme. This Methylobacterium nodulans (strain LMG 21967 / CNCM I-2342 / ORS 2060) protein is S-adenosylmethionine synthase.